The sequence spans 138 residues: Basic phospholipase A2 homolog promutoxin (138 aa).

Residues 1–16 (MRTLWIMAVLLLGVEG) form the signal peptide. 7 disulfides stabilise this stretch: Cys42–Cys132, Cys44–Cys60, Cys59–Cys112, Cys65–Cys138, Cys66–Cys105, Cys73–Cys98, and Cys91–Cys103. Positions 122–133 (KKHRVTMKFLCK) are important for membrane-damaging activities in eukaryotes and bacteria; heparin-binding.

Belongs to the phospholipase A2 family. Group II subfamily. R49 sub-subfamily. Homodimer; non-covalently linked. Expressed by the venom gland.

It localises to the secreted. In terms of biological role, snake venom phospholipase A2 homolog that lacks enzymatic activity. Exhibits potent myotoxicity causing myonecrosis and edema in the gastrocnemius muscle of mice. Is also able to stimulate the release of IL12 (IL12A-IL12B), TNF-alpha (TNF), IL6 and IL1-beta (IL1B) from human monocytes, and induce IL2, TNFalpha and IL6 release from T-cells. A model of myotoxic mechanism has been proposed: an apo Lys49-PLA2 is activated by the entrance of a hydrophobic molecule (e.g. fatty acid) at the hydrophobic channel of the protein leading to a reorientation of a monomer. This reorientation causes a transition between 'inactive' to 'active' states, causing alignment of C-terminal and membrane-docking sites (MDoS) side-by-side and putting the membrane-disruption sites (MDiS) in the same plane, exposed to solvent and in a symmetric position for both monomers. The MDoS region stabilizes the toxin on membrane by the interaction of charged residues with phospholipid head groups. Subsequently, the MDiS region destabilizes the membrane with penetration of hydrophobic residues. This insertion causes a disorganization of the membrane, allowing an uncontrolled influx of ions (i.e. calcium and sodium), and eventually triggering irreversible intracellular alterations and cell death. This chain is Basic phospholipase A2 homolog promutoxin, found in Protobothrops mucrosquamatus (Taiwan habu).